A 92-amino-acid chain; its full sequence is Small ribosomal subunit protein uS19 (92 aa).

It belongs to the universal ribosomal protein uS19 family.

In terms of biological role, protein S19 forms a complex with S13 that binds strongly to the 16S ribosomal RNA. In Bradyrhizobium sp. (strain BTAi1 / ATCC BAA-1182), this protein is Small ribosomal subunit protein uS19.